Here is a 389-residue protein sequence, read N- to C-terminus: Succinate--CoA ligase [ADP-forming] subunit beta (389 aa).

Residues 9–244 (KELLRQFNVP…IDEEDAAEIE (236 aa)) form the ATP-grasp domain. Residues Lys-46, 53–55 (GRG), Glu-99, Ala-102, and Glu-107 contribute to the ATP site. Mg(2+) is bound by residues Asn-199 and Asp-213. Substrate-binding positions include Asn-264 and 321-323 (GIM).

This sequence belongs to the succinate/malate CoA ligase beta subunit family. As to quaternary structure, heterotetramer of two alpha and two beta subunits. Mg(2+) serves as cofactor.

It catalyses the reaction succinate + ATP + CoA = succinyl-CoA + ADP + phosphate. The enzyme catalyses GTP + succinate + CoA = succinyl-CoA + GDP + phosphate. It participates in carbohydrate metabolism; tricarboxylic acid cycle; succinate from succinyl-CoA (ligase route): step 1/1. Succinyl-CoA synthetase functions in the citric acid cycle (TCA), coupling the hydrolysis of succinyl-CoA to the synthesis of either ATP or GTP and thus represents the only step of substrate-level phosphorylation in the TCA. The beta subunit provides nucleotide specificity of the enzyme and binds the substrate succinate, while the binding sites for coenzyme A and phosphate are found in the alpha subunit. The sequence is that of Succinate--CoA ligase [ADP-forming] subunit beta from Polynucleobacter asymbioticus (strain DSM 18221 / CIP 109841 / QLW-P1DMWA-1) (Polynucleobacter necessarius subsp. asymbioticus).